The sequence spans 112 residues: uncharacterized protein (112 aa).

The tract at residues 90-112 (KNFNNSKNDQIKKKKIDNNQVNL) is disordered.

This is an uncharacterized protein from Buchnera aphidicola subsp. Acyrthosiphon pisum (strain APS) (Acyrthosiphon pisum symbiotic bacterium).